A 281-amino-acid polypeptide reads, in one-letter code: Leukocyte antigen CD37 (281 aa).

At 1–17 (MSAQESCLSLIKYFLFV) the chain is on the cytoplasmic side. Residues 18-38 (FNLFFFVLGSLIFCFGIWILI) traverse the membrane as a helical segment. Over 39 to 59 (DKTSFVSFVGLAFVPLQIWSK) the chain is Extracellular. The helical transmembrane segment at 60–74 (VLAISGIFTMGIALL) threads the bilayer. Residues 75–85 (GCVGALKELRC) are Cytoplasmic-facing. A helical transmembrane segment spans residues 86–111 (LLGLYFGMLLLLFATQITLGILISTQ). Residues 112–241 (RAQLERSLRD…QGLQKWLHNN (130 aa)) lie on the Extracellular side of the membrane. 3 N-linked (GlcNAc...) asparagine glycosylation sites follow: N170, N183, and N188. Residues 242 to 266 (LISIVGICLGVGLLELGFMTLSIFL) form a helical membrane-spanning segment. The Cytoplasmic portion of the chain corresponds to 267–281 (CRNLDHVYNRLARYR).

It belongs to the tetraspanin (TM4SF) family. As to quaternary structure, interacts with SCIMP. Interacts with SOCS3. Interacts with DECTIN1/CLEC7A. In terms of processing, tyrosine phosphorylated; leading to activation of downstream signaling pathways. In terms of tissue distribution, B-lymphocytes. Antigen presenting cells.

Its subcellular location is the cell membrane. Structural component of specialized membrane microdomains known as tetraspanin-enriched microdomains (TERMs), which act as platforms for receptor clustering and signaling. Participates thereby in diverse biological functions such as cell signal transduction, adhesion, migration and protein trafficking. Upon ligand binding, two signaling pathways are activated, one acting through phosphorylation by LYN leading to cell death or a survival pathway with activation of GSK3B. Plays an essential role essential for clustering of integrin ITGA4/ITGB1 and promotes its mobility in the plasma membrane of B-cells. In turn, participates in ITGA4/ITGB1 integrin-mediated antiapoptotic signaling through AKT. Also plays a role in the migration of dendritic cells and neutrophils to draining lymph nodes, as well as in their integrin-mediated adhesion. Negatively regulates IL-6 responses through direct interaction with SOCS3 thereby preventing constitutive IL-6 signaling. Alternatively, inhibition of IL-6 signaling can also occur via interaction and stabilization of DECTIN1/CLEC7A at the cell membrane to inhibit its ability to promote the production of IL-6. This chain is Leukocyte antigen CD37 (CD37), found in Homo sapiens (Human).